The primary structure comprises 211 residues: Protein-L-isoaspartate O-methyltransferase (211 aa).

The active site involves S62.

Belongs to the methyltransferase superfamily. L-isoaspartyl/D-aspartyl protein methyltransferase family.

The protein resides in the cytoplasm. It carries out the reaction [protein]-L-isoaspartate + S-adenosyl-L-methionine = [protein]-L-isoaspartate alpha-methyl ester + S-adenosyl-L-homocysteine. Functionally, catalyzes the methyl esterification of L-isoaspartyl residues in peptides and proteins that result from spontaneous decomposition of normal L-aspartyl and L-asparaginyl residues. It plays a role in the repair and/or degradation of damaged proteins. This Shewanella putrefaciens (strain CN-32 / ATCC BAA-453) protein is Protein-L-isoaspartate O-methyltransferase.